The primary structure comprises 232 residues: Large ribosomal subunit protein uL3 (232 aa).

This sequence belongs to the universal ribosomal protein uL3 family. Part of the 50S ribosomal subunit. Forms a cluster with proteins L14 and L19.

One of the primary rRNA binding proteins, it binds directly near the 3'-end of the 23S rRNA, where it nucleates assembly of the 50S subunit. The protein is Large ribosomal subunit protein uL3 of Hydrogenobaculum sp. (strain Y04AAS1).